We begin with the raw amino-acid sequence, 130 residues long: Small ribosomal subunit protein uS11 (130 aa).

The segment at 1-21 (MAPQSKRSGGRKQKKHVPNGV) is disordered. Over residues 8 to 17 (SGGRKQKKHV) the composition is skewed to basic residues.

The protein belongs to the universal ribosomal protein uS11 family. As to quaternary structure, part of the 30S ribosomal subunit. Interacts with proteins S7 and S18. Binds to IF-3.

Its function is as follows. Located on the platform of the 30S subunit, it bridges several disparate RNA helices of the 16S rRNA. Forms part of the Shine-Dalgarno cleft in the 70S ribosome. The protein is Small ribosomal subunit protein uS11 of Acaryochloris marina (strain MBIC 11017).